The primary structure comprises 481 residues: Cerebral cavernous malformations 2 protein-like (481 aa).

Disordered regions lie at residues 161–193 (PVPAGMDGSPGGSGRDPGPPGAAPEKRRVGTAE) and 214–290 (EARA…DPQN). Basic and acidic residues predominate over residues 184–193 (PEKRRVGTAE). Positions 214 to 223 (EARAAGGGGS) are enriched in gly residues. Residues 237 to 251 (WERRQTFSGSWERRH) are compositionally biased toward basic and acidic residues.

This sequence belongs to the CCM2 family.

This is Cerebral cavernous malformations 2 protein-like (Ccm2l) from Mus musculus (Mouse).